The chain runs to 182 residues: Glutathione-regulated potassium-efflux system ancillary protein KefG (182 aa).

This sequence belongs to the NAD(P)H dehydrogenase (quinone) family. KefG subfamily. Interacts with KefB.

Its subcellular location is the cell inner membrane. It carries out the reaction a quinone + NADH + H(+) = a quinol + NAD(+). The enzyme catalyses a quinone + NADPH + H(+) = a quinol + NADP(+). Functionally, regulatory subunit of a potassium efflux system that confers protection against electrophiles. Required for full activity of KefB. The sequence is that of Glutathione-regulated potassium-efflux system ancillary protein KefG from Yersinia pseudotuberculosis serotype O:1b (strain IP 31758).